We begin with the raw amino-acid sequence, 412 residues long: Probable serine/threonine-protein kinase PBL10 (412 aa).

G2 carries N-myristoyl glycine lipidation. C4 carries S-palmitoyl cysteine lipidation. Residues 15-45 (GASPKYMSSEANDSLGSKSSSVSIRTNPRTE) form a disordered region. Polar residues predominate over residues 23–43 (SEANDSLGSKSSSVSIRTNPR). T58 carries the phosphothreonine modification. Residues 69 to 356 (FRPDSVLGEG…VVSHLEHIQT (288 aa)) form the Protein kinase domain. Residues 75-83 (LGEGGFGSV) and K107 each bind ATP. Phosphotyrosine is present on Y152. D204 functions as the Proton acceptor in the catalytic mechanism. A phosphoserine mark is found at S208 and S238. Phosphothreonine is present on residues T239 and T244. Position 252 is a phosphotyrosine (Y252).

The protein belongs to the protein kinase superfamily. Ser/Thr protein kinase family. As to quaternary structure, interacts with the Xanthomonas campestris effector XopAC/AvrAC. Expressed in stomatal guard cells of leaves.

The protein resides in the cell membrane. It carries out the reaction L-seryl-[protein] + ATP = O-phospho-L-seryl-[protein] + ADP + H(+). The catalysed reaction is L-threonyl-[protein] + ATP = O-phospho-L-threonyl-[protein] + ADP + H(+). Its function is as follows. Possible bi-functional kinase. In vitro, it exhibits serine/threonine activity. In vivo, can phosphorylate tyrosine residues of limited substrates. May be involved in plant defense signaling. Required for full light-induced stomatal opening. In Arabidopsis thaliana (Mouse-ear cress), this protein is Probable serine/threonine-protein kinase PBL10.